Consider the following 411-residue polypeptide: Serine hydroxymethyltransferase (411 aa).

(6S)-5,6,7,8-tetrahydrofolate is bound by residues Leu119 and 123–125 (GHL). The residue at position 228 (Lys228) is an N6-(pyridoxal phosphate)lysine. 351–353 (SPF) is a binding site for (6S)-5,6,7,8-tetrahydrofolate.

The protein belongs to the SHMT family. In terms of assembly, homodimer. Pyridoxal 5'-phosphate is required as a cofactor.

Its subcellular location is the cytoplasm. It catalyses the reaction (6R)-5,10-methylene-5,6,7,8-tetrahydrofolate + glycine + H2O = (6S)-5,6,7,8-tetrahydrofolate + L-serine. It functions in the pathway one-carbon metabolism; tetrahydrofolate interconversion. The protein operates within amino-acid biosynthesis; glycine biosynthesis; glycine from L-serine: step 1/1. In terms of biological role, catalyzes the reversible interconversion of serine and glycine with tetrahydrofolate (THF) serving as the one-carbon carrier. This reaction serves as the major source of one-carbon groups required for the biosynthesis of purines, thymidylate, methionine, and other important biomolecules. Also exhibits THF-independent aldolase activity toward beta-hydroxyamino acids, producing glycine and aldehydes, via a retro-aldol mechanism. The chain is Serine hydroxymethyltransferase from Clostridium novyi (strain NT).